The following is a 216-amino-acid chain: Pyrophosphatase PpaX (216 aa).

The active-site Nucleophile is Asp12.

Belongs to the HAD-like hydrolase superfamily. PpaX family. The cofactor is Mg(2+).

It carries out the reaction diphosphate + H2O = 2 phosphate + H(+). Hydrolyzes pyrophosphate formed during P-Ser-HPr dephosphorylation by HPrK/P. Might play a role in controlling the intracellular pyrophosphate pool. This Bacillus pumilus (strain SAFR-032) protein is Pyrophosphatase PpaX.